A 453-amino-acid chain; its full sequence is Magnesium transporter MgtE (453 aa).

Topologically, residues 1 to 286 (MNEGQEMEEQ…ENPLKAASKR (286 aa)) are cytoplasmic. Positions 71, 98, 102, 136, 140, 176, 227, 230, 233, 251, and 259 each coordinate Mg(2+). 2 CBS domains span residues 142-205 (MTTE…IADI) and 206-262 (LNER…EAAS). Residues 287-307 (LPWLITLLFLGMSTASLISNY) form a helical membrane-spanning segment. Position 308 (glutamate 308) is a topological domain, extracellular. A helical membrane pass occupies residues 309-329 (SLVSEASILAVFISLITGTAG). The Cytoplasmic portion of the chain corresponds to 330–360 (NAGTQSLAVAVRRLAMKDEKDSNFGRLILSE). A helical membrane pass occupies residues 361 to 381 (VLTGLVTGAVTGLTIMIVVGV). At 382–389 (WQHNLPLG) the chain is on the extracellular side. A helical transmembrane segment spans residues 390–410 (FVIGMAMLCAITVANLAGSLI). Over 411–427 (PMLMDKLGFDPAVASGP) the chain is Cytoplasmic. A helical membrane pass occupies residues 428–448 (FITTLSDLTSVLIYFNIASMF). A Mg(2+)-binding site is contributed by aspartate 434. Residues 449 to 453 (MRYFV) lie on the Extracellular side of the membrane.

Belongs to the SLC41A transporter family. In terms of assembly, homodimer.

It is found in the cell membrane. The catalysed reaction is Mg(2+)(in) = Mg(2+)(out). Its function is as follows. Acts as a magnesium transporter. The protein is Magnesium transporter MgtE of Enterococcus faecalis (strain ATCC 700802 / V583).